Reading from the N-terminus, the 358-residue chain is S-adenosylmethionine:tRNA ribosyltransferase-isomerase (358 aa).

It belongs to the QueA family. Monomer.

It is found in the cytoplasm. It catalyses the reaction 7-aminomethyl-7-carbaguanosine(34) in tRNA + S-adenosyl-L-methionine = epoxyqueuosine(34) in tRNA + adenine + L-methionine + 2 H(+). It functions in the pathway tRNA modification; tRNA-queuosine biosynthesis. Functionally, transfers and isomerizes the ribose moiety from AdoMet to the 7-aminomethyl group of 7-deazaguanine (preQ1-tRNA) to give epoxyqueuosine (oQ-tRNA). The polypeptide is S-adenosylmethionine:tRNA ribosyltransferase-isomerase (Chelativorans sp. (strain BNC1)).